Reading from the N-terminus, the 420-residue chain is E3 ubiquitin protein ligase DRIP2 (420 aa).

The RING-type zinc finger occupies 20–61; sequence CPLCDKLLRDATTISECLHTFCRKCIYEKITEDEIESCPVCD. Residues 113 to 123 are compositionally biased toward polar residues; that stretch reads ISSLVVSTPRV. Disordered regions lie at residues 113 to 201 and 226 to 289; these read ISSL…KDVD and DPKS…TFGD. The segment covering 154–165 has biased composition (basic and acidic residues); it reads KKEEEFGDDHVE. Composition is skewed to polar residues over residues 166–194 and 232–242; these read SASSPETLKKFTQNKRQSSYANPNQSLSN and GNASHNDVQGS. Basic residues predominate over residues 244–253; that stretch reads TKTKDHKRKC. Positions 260–273 are enriched in polar residues; sequence SNNGDPTTSETATL. Residues 274–284 show a composition bias toward basic residues; the sequence is KRTRRTRRKRS.

As to quaternary structure, interacts with DREB2A. Auto-ubiquitinated. As to expression, expressed in roots, leaves and flowers.

The enzyme catalyses S-ubiquitinyl-[E2 ubiquitin-conjugating enzyme]-L-cysteine + [acceptor protein]-L-lysine = [E2 ubiquitin-conjugating enzyme]-L-cysteine + N(6)-ubiquitinyl-[acceptor protein]-L-lysine.. It participates in protein modification; protein ubiquitination. Its function is as follows. E3 ubiquitin-protein ligase that acts as a negative regulator of the response to water stress. Mediates ubiquitination and subsequent proteasomal degradation of the drought-induced transcriptional activator DREB2A. Functionally redundant with DRIP1. The sequence is that of E3 ubiquitin protein ligase DRIP2 (DRIP2) from Arabidopsis thaliana (Mouse-ear cress).